The primary structure comprises 218 residues: Grancalcin (218 aa).

4 EF-hand domains span residues 49–84 (SSAG…SGIS), 85–119 (GTYS…KELW), 120–155 (SALN…MGYR), and 156–191 (LSPQ…ALTD). Ca(2+) contacts are provided by Asp-103, Asp-105, Thr-107, Lys-109, Asp-133, Asp-135, Ser-137, Thr-139, and Glu-144.

As to quaternary structure, homodimer. Interacts with SRI and LCP1.

It is found in the cytoplasm. The protein resides in the cytoplasmic granule membrane. In terms of biological role, calcium-binding protein that may play a role in the adhesion of neutrophils to fibronectin. May play a role in the formation of focal adhesions. The chain is Grancalcin (GCA) from Pongo abelii (Sumatran orangutan).